A 252-amino-acid chain; its full sequence is Imidazole glycerol phosphate synthase subunit HisF (252 aa).

Active-site residues include Asp11 and Asp130.

This sequence belongs to the HisA/HisF family. In terms of assembly, heterodimer of HisH and HisF.

It localises to the cytoplasm. It carries out the reaction 5-[(5-phospho-1-deoxy-D-ribulos-1-ylimino)methylamino]-1-(5-phospho-beta-D-ribosyl)imidazole-4-carboxamide + L-glutamine = D-erythro-1-(imidazol-4-yl)glycerol 3-phosphate + 5-amino-1-(5-phospho-beta-D-ribosyl)imidazole-4-carboxamide + L-glutamate + H(+). Its pathway is amino-acid biosynthesis; L-histidine biosynthesis; L-histidine from 5-phospho-alpha-D-ribose 1-diphosphate: step 5/9. Its function is as follows. IGPS catalyzes the conversion of PRFAR and glutamine to IGP, AICAR and glutamate. The HisF subunit catalyzes the cyclization activity that produces IGP and AICAR from PRFAR using the ammonia provided by the HisH subunit. This is Imidazole glycerol phosphate synthase subunit HisF from Bacillus cereus (strain Q1).